A 217-amino-acid chain; its full sequence is Vesicle transport through interaction with t-SNAREs homolog 1A (217 aa).

At 1-192 the chain is on the cytoplasmic side; that stretch reads MDVFERTEQN…TGIARRLATN (192 aa). Residues 36 to 97 adopt a coiled-coil conformation; sequence AVREVENDID…AQLQSSNQTN (62 aa). The segment at 90–109 is disordered; the sequence is LQSSNQTNSNPWSNAPDDYQ. The region spanning 123-185 is the t-SNARE coiled-coil homology domain; the sequence is SNMLDSTSDR…KSARKIMTGI (63 aa). A helical; Anchor for type IV membrane protein transmembrane segment spans residues 193-213; sequence KVILSIIILLLMGIIALIICL. Residues 214 to 217 are Vesicular-facing; sequence KWLR.

It belongs to the VTI1 family. As to quaternary structure, component of the SNARE complex composed of syn7A, syn8A, vamp7A and vti1A.

The protein resides in the membrane. It localises to the cytoplasmic vesicle. The protein localises to the secretory vesicle membrane. Its subcellular location is the clathrin-coated vesicle membrane. It is found in the endosome membrane. The protein resides in the endoplasmic reticulum membrane. Its function is as follows. V-SNARE that mediates vesicle transport pathways through interactions with t-SNAREs on the target membrane. These interactions are proposed to mediate aspects of the specificity of vesicle trafficking and to promote fusion of the lipid bilayers. This is Vesicle transport through interaction with t-SNAREs homolog 1A from Dictyostelium discoideum (Social amoeba).